The following is a 155-amino-acid chain: Small ribosomal subunit protein uS7c (155 aa).

The protein belongs to the universal ribosomal protein uS7 family. Part of the 30S ribosomal subunit.

Its subcellular location is the plastid. The protein resides in the chloroplast. Its function is as follows. One of the primary rRNA binding proteins, it binds directly to 16S rRNA where it nucleates assembly of the head domain of the 30S subunit. The polypeptide is Small ribosomal subunit protein uS7c (rps7) (Euonymus alatus (Burning bush)).